Consider the following 142-residue polypeptide: NTF2-related export protein 2 (142 aa).

Residues 17-136 enclose the NTF2 domain; the sequence is AAEEFVNIYY…WKIASDCFRF (120 aa).

In terms of assembly, associates with NXF1, NXF2, NXF3 and NXF5.

Its subcellular location is the nucleus. It localises to the cytoplasm. Regulator of protein export for NES-containing proteins. Also plays a role in mRNA nuclear export. The polypeptide is NTF2-related export protein 2 (Nxt2) (Mus musculus (Mouse)).